The primary structure comprises 143 residues: Fluoride-specific ion channel FluC 1 (143 aa).

Transmembrane regions (helical) follow at residues 13–33 (VLVGLVFLGGCLGTLIRSVIA), 42–62 (GVPWGTLAINLVGAFVLATLL), 80–100 (LCIGTGLLGGFTTYSALTVEA), and 111–131 (WGIAYLLTSVAAGALLAWVVI). Gly88 and Thr91 together coordinate Na(+).

Belongs to the fluoride channel Fluc/FEX (TC 1.A.43) family.

The protein resides in the cell membrane. The catalysed reaction is fluoride(in) = fluoride(out). Na(+) is not transported, but it plays an essential structural role and its presence is essential for fluoride channel function. In terms of biological role, fluoride-specific ion channel. Important for reducing fluoride concentration in the cell, thus reducing its toxicity. The sequence is that of Fluoride-specific ion channel FluC 1 from Cutibacterium acnes (strain DSM 16379 / KPA171202) (Propionibacterium acnes).